We begin with the raw amino-acid sequence, 32 residues long: Cytochrome b6-f complex subunit 8 (32 aa).

The chain crosses the membrane as a helical span at residues 6–26 (IVSLAWAALMVVFTFSLSLVV).

It belongs to the PetN family. As to quaternary structure, the 4 large subunits of the cytochrome b6-f complex are cytochrome b6, subunit IV (17 kDa polypeptide, PetD), cytochrome f and the Rieske protein, while the 4 small subunits are PetG, PetL, PetM and PetN. The complex functions as a dimer.

The protein resides in the plastid. It is found in the chloroplast thylakoid membrane. In terms of biological role, component of the cytochrome b6-f complex, which mediates electron transfer between photosystem II (PSII) and photosystem I (PSI), cyclic electron flow around PSI, and state transitions. The chain is Cytochrome b6-f complex subunit 8 from Illicium oligandrum (Star anise).